The sequence spans 597 residues: TOX high mobility group box family member 4 (597 aa).

Disordered regions lie at residues Gly160 to Lys224 and Val520 to Pro546. A compositionally biased stretch (basic residues) spans Lys207 to Lys217. Residues Lys212–Lys217 carry the Nuclear localization signal motif. Residues Pro222 to Lys290 constitute a DNA-binding region (HMG box).

As to quaternary structure, component of the PNUTS-PP1 phosphatase complex.

It localises to the nucleus. It is found in the chromosome. In terms of biological role, transcription factor that modulates cell fate reprogramming from the somatic state to the pluripotent and neuronal fate. Also acts as a regulatory component of protein phosphatase 1 (PP1) complexes. Component of the PNUTS-PP1 protein phosphatase complex, a PP1 complex that regulates RNA polymerase II transcription pause-release. PNUTS-PP1 also plays a role in the control of chromatin structure and cell cycle progression during the transition from mitosis into interphase. The chain is TOX high mobility group box family member 4 (tox4) from Xenopus tropicalis (Western clawed frog).